A 71-amino-acid polypeptide reads, in one-letter code: UPF0346 protein SMU_1621c (71 aa).

The protein belongs to the UPF0346 family.

This Streptococcus mutans serotype c (strain ATCC 700610 / UA159) protein is UPF0346 protein SMU_1621c.